Consider the following 419-residue polypeptide: Zinc metalloprotease RasP (419 aa).

4 helical membrane passes run 4 to 24 (VIAF…GHLI), 173 to 193 (IAAG…MLGL), 349 to 369 (LAAF…PALD), and 391 to 411 (EAFV…VVTW). His18 lines the Zn(2+) pocket. Glu19 is a catalytic residue. Residue His22 coordinates Zn(2+). The 86-residue stretch at 184–269 (AYVILVMLGL…KLTKYVTPEA (86 aa)) folds into the PDZ domain.

The protein belongs to the peptidase M50B family. It depends on Zn(2+) as a cofactor.

It localises to the cell membrane. Functionally, is responsible for Site-2 cleavage of the RsiW anti-sigma factor. This results, after a third proteolytic step catalyzed by the ClpXP protease, in the release of SigW and the transcription activation of the genes under the control of the sigma-W factor. The protein is Zinc metalloprotease RasP (rasP) of Bacillus licheniformis (strain ATCC 14580 / DSM 13 / JCM 2505 / CCUG 7422 / NBRC 12200 / NCIMB 9375 / NCTC 10341 / NRRL NRS-1264 / Gibson 46).